We begin with the raw amino-acid sequence, 89 residues long: MAHKKAGGSSRNGRDSAGRRLGVKKFGGETVIPGNIILRQRGTKWWPGDNVGMGKDHTLFATVEGNVSFKKGFKGRTFVSVLPVAEAAE.

Residues 1–22 (MAHKKAGGSSRNGRDSAGRRLG) are disordered.

This sequence belongs to the bacterial ribosomal protein bL27 family.

This Dinoroseobacter shibae (strain DSM 16493 / NCIMB 14021 / DFL 12) protein is Large ribosomal subunit protein bL27.